We begin with the raw amino-acid sequence, 287 residues long: Glycine--tRNA ligase alpha subunit (287 aa).

Belongs to the class-II aminoacyl-tRNA synthetase family. Tetramer of two alpha and two beta subunits.

The protein resides in the cytoplasm. The enzyme catalyses tRNA(Gly) + glycine + ATP = glycyl-tRNA(Gly) + AMP + diphosphate. This is Glycine--tRNA ligase alpha subunit from Campylobacter jejuni subsp. doylei (strain ATCC BAA-1458 / RM4099 / 269.97).